The sequence spans 202 residues: Arenicin-1 (202 aa).

An N-terminal signal peptide occupies residues 1-25; sequence MTSTQSVAVCATLILAIFCVNDIHC. Residues 26 to 181 constitute a propeptide that is removed on maturation; sequence DPIAEARAAA…SGDNNEPEKR (156 aa). In terms of domain architecture, BRICHOS spans 73–168; sequence GDGVEGSVMV…ACQGKSVYWL (96 aa). 2 cysteine pairs are disulfide-bonded: Cys-100–Cys-160 and Cys-184–Cys-201.

Functionally, has antimicrobial activity against the Gram-negative bacteria E.coli and P.mirabilis, the Gram-positive bacterium L.monocytogenes and the yeast C.albicans. This is Arenicin-1 from Arenicola marina (Lugworm).